The sequence spans 350 residues: Streptomycin biosynthesis operon possible regulatory protein (350 aa).

Polar residues predominate over residues 1 to 10 (MEHISGNSPE). Disordered regions lie at residues 1 to 20 (MEHISGNSPEQVRERSAAVT), 168 to 189 (AGVPQSNVRIGRDGRARPLDPT), and 211 to 258 (AAQA…SRAD). 2 stretches are compositionally biased toward basic and acidic residues: residues 177–189 (IGRDGRARPLDPT) and 223–242 (DVRKRLSRGESPLPERDRQQ).

This is Streptomycin biosynthesis operon possible regulatory protein (strR) from Streptomyces griseus.